The sequence spans 123 residues: SPbeta prophage-derived uncharacterized protein YorE (123 aa).

The protein is SPbeta prophage-derived uncharacterized protein YorE (yorE) of Bacillus subtilis (strain 168).